Consider the following 947-residue polypeptide: Bifunctional glutamine synthetase adenylyltransferase/adenylyl-removing enzyme (947 aa).

The tract at residues 1 to 440 (MTPLSSPLSQ…VFNELIGDDE (440 aa)) is adenylyl removase. The interval 450 to 947 (SEPWREVWQD…ASWRKWLVAV (498 aa)) is adenylyl transferase.

Belongs to the GlnE family. Requires Mg(2+) as cofactor.

It carries out the reaction [glutamine synthetase]-O(4)-(5'-adenylyl)-L-tyrosine + phosphate = [glutamine synthetase]-L-tyrosine + ADP. The catalysed reaction is [glutamine synthetase]-L-tyrosine + ATP = [glutamine synthetase]-O(4)-(5'-adenylyl)-L-tyrosine + diphosphate. Functionally, involved in the regulation of glutamine synthetase GlnA, a key enzyme in the process to assimilate ammonia. When cellular nitrogen levels are high, the C-terminal adenylyl transferase (AT) inactivates GlnA by covalent transfer of an adenylyl group from ATP to specific tyrosine residue of GlnA, thus reducing its activity. Conversely, when nitrogen levels are low, the N-terminal adenylyl removase (AR) activates GlnA by removing the adenylyl group by phosphorolysis, increasing its activity. The regulatory region of GlnE binds the signal transduction protein PII (GlnB) which indicates the nitrogen status of the cell. The sequence is that of Bifunctional glutamine synthetase adenylyltransferase/adenylyl-removing enzyme from Salmonella paratyphi B (strain ATCC BAA-1250 / SPB7).